Reading from the N-terminus, the 128-residue chain is Small ribosomal subunit protein uS12 (128 aa).

Residue Asp-89 is modified to 3-methylthioaspartic acid. The interval 101-128 (SLDTSGVADRRNGRSKYGAKRPKEGAKK) is disordered.

The protein belongs to the universal ribosomal protein uS12 family. Part of the 30S ribosomal subunit. Contacts proteins S8 and S17. May interact with IF1 in the 30S initiation complex.

In terms of biological role, with S4 and S5 plays an important role in translational accuracy. Functionally, interacts with and stabilizes bases of the 16S rRNA that are involved in tRNA selection in the A site and with the mRNA backbone. Located at the interface of the 30S and 50S subunits, it traverses the body of the 30S subunit contacting proteins on the other side and probably holding the rRNA structure together. The combined cluster of proteins S8, S12 and S17 appears to hold together the shoulder and platform of the 30S subunit. The polypeptide is Small ribosomal subunit protein uS12 (Chloroherpeton thalassium (strain ATCC 35110 / GB-78)).